Here is a 236-residue protein sequence, read N- to C-terminus: 2-C-methyl-D-erythritol 4-phosphate cytidylyltransferase (236 aa).

This sequence belongs to the IspD/TarI cytidylyltransferase family. IspD subfamily. In terms of assembly, homodimer.

The enzyme catalyses 2-C-methyl-D-erythritol 4-phosphate + CTP + H(+) = 4-CDP-2-C-methyl-D-erythritol + diphosphate. The protein operates within isoprenoid biosynthesis; isopentenyl diphosphate biosynthesis via DXP pathway; isopentenyl diphosphate from 1-deoxy-D-xylulose 5-phosphate: step 2/6. Catalyzes the formation of 4-diphosphocytidyl-2-C-methyl-D-erythritol from CTP and 2-C-methyl-D-erythritol 4-phosphate (MEP). The protein is 2-C-methyl-D-erythritol 4-phosphate cytidylyltransferase of Klebsiella pneumoniae subsp. pneumoniae (strain ATCC 700721 / MGH 78578).